Consider the following 889-residue polypeptide: Exocyst complex component 1 (889 aa).

Residues S145 and S148 each carry the phosphoserine modification. Positions 156–269 (RAVQKTQHMD…GHVKETMEKI (114 aa)) form a coiled coil. At S456 the chain carries Phosphoserine.

The protein belongs to the SEC3 family. As to quaternary structure, the exocyst complex is composed of Sec3/Exoc1, Sec5/Exoc2, Sec6/Exoc3, Sec8/Exoc4, Sec10/Exoc5, Sec15/Exoc6, Exo70/Exoc7 and Exo84/Exoc8.

Functionally, component of the exocyst complex involved in the docking of exocytic vesicles with fusion sites on the plasma membrane. In Drosophila melanogaster (Fruit fly), this protein is Exocyst complex component 1.